A 1072-amino-acid polypeptide reads, in one-letter code: PWWP domain-containing protein 1 (1072 aa).

Positions 21–133 (DSIQDPKVTP…ADEKELDLGL (113 aa)) are disordered. A compositionally biased stretch (low complexity) spans 25 to 38 (DPKVTPDDTVVDSS). Positions 66 to 77 (RVLESERSEKDG) are enriched in basic and acidic residues. Positions 96–128 (KDDESSEVKEEEEEEDGSDDQSSELGSEADEKE) are enriched in acidic residues. The PWWP domain occupies 173–234 (VGDLVWGKVK…PAELIPFEPN (62 aa)). The disordered stretch occupies residues 365-387 (KSPRSSVSTLEPHNRAPPRAPLS). Over residues 366 to 375 (SPRSSVSTLE) the composition is skewed to polar residues. The Nuclear localization signal 1 signature appears at 402–409 (SKKPTKVK). 4 disordered regions span residues 486-619 (AIPG…GEAG), 681-738 (LSVS…KTNQ), 871-931 (KAEP…NGNR), and 944-973 (ENSS…SSSV). A compositionally biased stretch (basic and acidic residues) spans 498-526 (SLDEEKGLAEKSKERMEERAAVLPEHGKS). Positions 545 to 568 (AGSSLQPLLESHTSASEGKSSTGS) are enriched in polar residues. 3 short sequence motifs (nuclear localization signal) span residues 596–603 (KKKKKEPD), 705–712 (VKRTEDPS), and 733–740 (LKKTNQLK). Residues 706 to 729 (KRTEDPSKAGKKRLSSDRQDEIPS) are compositionally biased toward basic and acidic residues. Basic and acidic residues predominate over residues 871–880 (KAEPREPENT). The segment covering 897–906 (LHQPTLPPPN) has biased composition (pro residues). Residues 921–930 (SSSSNNGNGN) show a composition bias toward low complexity. Residues 947–966 (SKANTEPPQVTMTLNRNSGP) are compositionally biased toward polar residues.

This sequence belongs to the PDP family. As to quaternary structure, interacts with MSI4/FVE. Component of the PRC2 (polycomb repressive complex 2) complex which regulates histone methylation on histone H3K27.

Its subcellular location is the nucleus. In terms of biological role, together with PDP2, PDP3 and PDP6, interacts with MSI4/FVE and MSI5 to suppress FLC, MAF4 and MAF5 expression by regulating the function of the PRC2 complex and modulating H3K27me3 level, thereby promoting flowering. This is PWWP domain-containing protein 1 from Arabidopsis thaliana (Mouse-ear cress).